The sequence spans 567 residues: Chaperone ric-8 (567 aa).

The protein belongs to the synembryn family.

It is found in the cytoplasm. The protein localises to the cell cortex. Chaperone that specifically binds and folds some, but not all, nascent G alpha proteins prior to G protein heterotrimer formation, promoting their stability and activity. Also acts as a guanine nucleotide exchange factor (GEF) for G alpha proteins by stimulating exchange of bound GDP for free GTP. Able to facilitate synaptic transmission in the nervous system probably by activating G(q)-alpha (egl-30). Also able to activate the G(s)-alpha in synaptic signaling network. Plays a key role in asymmetric spindle positioning, a step for asymmetric cell division that generates cell diversity during development by activating G(i)-alpha protein goa-1 and gpa-16 independently of G-protein coupled receptors. While it acts as a GEF for goa-1, it has no GEF activity toward gpa-16. In addition to its GEF activity, it is required for cortical subcellular localization of G-alpha proteins such as gpa-16. Also required for the interaction of goa-1 and gpr-1/2, suggesting that it may act by generating G-alpha proteins free from G-beta-gamma subunits, enabling gpr-1/2 to mediate asymmetric cell division. The chain is Chaperone ric-8 (ric-8) from Caenorhabditis briggsae.